A 387-amino-acid chain; its full sequence is S-adenosylmethionine synthase (387 aa).

ATP is bound at residue His-17. Asp-19 contributes to the Mg(2+) binding site. Glu-45 is a K(+) binding site. Residues Glu-58 and Gln-101 each contribute to the L-methionine site. A flexible loop region spans residues 101-111 (QSPDIAQGVDR). ATP is bound by residues 168 to 170 (DAK), 234 to 235 (RF), Asp-243, 249 to 250 (RK), Ala-266, and Lys-270. Asp-243 serves as a coordination point for L-methionine. L-methionine is bound at residue Lys-274.

Belongs to the AdoMet synthase family. In terms of assembly, homotetramer; dimer of dimers. Requires Mg(2+) as cofactor. K(+) is required as a cofactor.

It is found in the cytoplasm. It carries out the reaction L-methionine + ATP + H2O = S-adenosyl-L-methionine + phosphate + diphosphate. Its pathway is amino-acid biosynthesis; S-adenosyl-L-methionine biosynthesis; S-adenosyl-L-methionine from L-methionine: step 1/1. Functionally, catalyzes the formation of S-adenosylmethionine (AdoMet) from methionine and ATP. The overall synthetic reaction is composed of two sequential steps, AdoMet formation and the subsequent tripolyphosphate hydrolysis which occurs prior to release of AdoMet from the enzyme. The chain is S-adenosylmethionine synthase from Bordetella petrii (strain ATCC BAA-461 / DSM 12804 / CCUG 43448).